The sequence spans 145 residues: D-aminoacyl-tRNA deacylase (145 aa).

Residues 137 to 138 (GP) carry the Gly-cisPro motif, important for rejection of L-amino acids motif.

It belongs to the DTD family. In terms of assembly, homodimer.

It is found in the cytoplasm. The enzyme catalyses glycyl-tRNA(Ala) + H2O = tRNA(Ala) + glycine + H(+). It carries out the reaction a D-aminoacyl-tRNA + H2O = a tRNA + a D-alpha-amino acid + H(+). An aminoacyl-tRNA editing enzyme that deacylates mischarged D-aminoacyl-tRNAs. Also deacylates mischarged glycyl-tRNA(Ala), protecting cells against glycine mischarging by AlaRS. Acts via tRNA-based rather than protein-based catalysis; rejects L-amino acids rather than detecting D-amino acids in the active site. By recycling D-aminoacyl-tRNA to D-amino acids and free tRNA molecules, this enzyme counteracts the toxicity associated with the formation of D-aminoacyl-tRNA entities in vivo and helps enforce protein L-homochirality. This Pseudoalteromonas translucida (strain TAC 125) protein is D-aminoacyl-tRNA deacylase.